A 399-amino-acid chain; its full sequence is uncharacterized protein (399 aa).

11 consecutive transmembrane segments (helical) span residues 19–39 (IFSINLLYMGILSGISYPLFV), 46–66 (VNLLFAIVIGAVFEIPLLLMY), 91–111 (FYTIFGISLWLTYVLSQPILG), 123–143 (QFEQFLIVESLFPLVLLIIAS), 146–166 (IYAKIVDILAIFQIIIAIFIA), 183–203 (LLSALLFDLSAFIFINAISYI), 225–247 (VAILSILDSYSNLNILFALMPIW), 283–303 (VLLLIFSTETIANVLENLLGF), 307–327 (FGLDGLLFIFWNFIIVAFAYL), 335–355 (LFSIVLTSLAIQIFLFFYLGY), and 369–389 (IEYTILRIMILPIIGAIVYLL).

The protein resides in the host membrane. Putative amino acid transporter. This is an uncharacterized protein from Saccharolobus islandicus (Sulfolobus islandicus).